Consider the following 142-residue polypeptide: Gonadotropin subunit beta-2 (142 aa).

Residues 1–23 (MLGLHVGTLISLFLCILLEPIEG) form the signal peptide. 6 disulfide bridges follow: Cys29/Cys77, Cys43/Cys92, Cys46/Cys130, Cys54/Cys108, Cys58/Cys110, and Cys113/Cys120. A glycan (N-linked (GlcNAc...) asparagine) is linked at Asn33.

This sequence belongs to the glycoprotein hormones subunit beta family. In terms of assembly, heterodimer of an alpha and a beta chain.

It localises to the secreted. Its function is as follows. Involved in gametogenesis and steroidogenesis. This is Gonadotropin subunit beta-2 (cgbb) from Oncorhynchus tshawytscha (Chinook salmon).